Here is a 173-residue protein sequence, read N- to C-terminus: NEDD4-binding protein 2-like 1 (173 aa).

The tract at residues 1–35 (MEESFLESFGRLSLRQQQPPPPRPPAPPPLRGTPP) is disordered. A compositionally biased stretch (pro residues) spans 18–32 (QPPPPRPPAPPPLRG).

Interacts with dynactin subunit proteins, including DCTN4, DCTN5 and DCTN5.

Might play a role in adipocyte differentiation and triglyceride accumulation. The polypeptide is NEDD4-binding protein 2-like 1 (N4BP2L1) (Bos taurus (Bovine)).